A 181-amino-acid polypeptide reads, in one-letter code: Thioredoxin M-type, chloroplastic (181 aa).

A chloroplast-targeting transit peptide spans 1–67 (MAIENCLQLS…RQFRYSSVVC (67 aa)). The region spanning 68 to 180 (KASEAVKEVQ…LTDSIEKYLS (113 aa)) is the Thioredoxin domain. Catalysis depends on nucleophile residues Cys-104 and Cys-107. Cys-104 and Cys-107 are disulfide-bonded.

This sequence belongs to the thioredoxin family. Plant M-type subfamily. Forms a complex with heterodimeric ferredoxin-thioredoxin reductase (FTR) and ferredoxin.

The protein localises to the plastid. It localises to the chloroplast. In terms of biological role, participates in various redox reactions through the reversible oxidation of the active center dithiol to a disulfide. The M form is known to activate NADP-malate dehydrogenase. This chain is Thioredoxin M-type, chloroplastic, found in Spinacia oleracea (Spinach).